The following is a 185-amino-acid chain: Elongation factor P (185 aa).

It belongs to the elongation factor P family.

It is found in the cytoplasm. It participates in protein biosynthesis; polypeptide chain elongation. Involved in peptide bond synthesis. Stimulates efficient translation and peptide-bond synthesis on native or reconstituted 70S ribosomes in vitro. Probably functions indirectly by altering the affinity of the ribosome for aminoacyl-tRNA, thus increasing their reactivity as acceptors for peptidyl transferase. The sequence is that of Elongation factor P from Streptococcus equi subsp. equi (strain 4047).